Reading from the N-terminus, the 1146-residue chain is Activator of SKN7 protein 10 (1146 aa).

The span at 1-15 shows a compositional bias: polar residues; that stretch reads MSDYFSSRPSQTLTP. Disordered regions lie at residues 1–32 and 171–194; these read MSDY…ASSI and ITDP…KVGL. Ser344 is subject to Phosphoserine. Residues 482–606 form the PH domain; that stretch reads CIKAGYFLKK…DCTLKDASST (125 aa). Residues 553 to 575 are disordered; sequence NNHHRQASDVHNSSTTTGGTAGA. The span at 564 to 575 shows a compositional bias: low complexity; that stretch reads NSSTTTGGTAGA. Ser793 bears the Phosphoserine mark. Thr808 is subject to Phosphothreonine. Disordered stretches follow at residues 835-854 and 909-982; these read MATS…PQSM and PVNS…TAMR. Residues 912–924 are compositionally biased toward low complexity; sequence SPGSSNSESSSGG. Over residues 939–950 the composition is skewed to polar residues; it reads YTQRNSEGSSPC. At Ser944 the chain carries Phosphoserine. Over residues 958 to 968 the composition is skewed to low complexity; that stretch reads QQQQPLQMQPL. Ser969 carries the post-translational modification Phosphoserine. A compositionally biased stretch (polar residues) spans 969 to 982; sequence SRTSSSSVNVTAMR. Phosphothreonine is present on Thr1017. 3 positions are modified to phosphoserine: Ser1070, Ser1095, and Ser1098. Residues 1124–1146 form a disordered region; the sequence is GIQEDDGDSTNNDTIKLNQSIYS. The span at 1132 to 1146 shows a compositional bias: polar residues; that stretch reads STNNDTIKLNQSIYS.

It belongs to the RGC1 family. In terms of assembly, component of the RNA polymerase II holoenzyme. Interacts with RPO21 and SSN8. Phosphorylated in response to various stresses. stress-induced phosphorylation is partially dependent on HOG1.

The protein localises to the cytoplasm. In terms of biological role, positive regulator of FPS1 glycerol channel required for the glycerol efflux. As a component of the RNA polymerase II holoenzyme, is required for SSN8 destruction in response to oxidative stress but not heat shock. Required for cell survival in response to heat shock independent of SSN8. The polypeptide is Activator of SKN7 protein 10 (ASK10) (Saccharomyces cerevisiae (strain ATCC 204508 / S288c) (Baker's yeast)).